The following is a 340-amino-acid chain: Outer membrane protein B (340 aa).

The signal sequence occupies residues 1-26; sequence MSSKLVNYLRLTFLSFLGIASTSLDA.

The protein belongs to the chlamydial OMP family.

It localises to the cell outer membrane. The protein is Outer membrane protein B (ompB) of Chlamydia trachomatis serovar D (strain ATCC VR-885 / DSM 19411 / UW-3/Cx).